An 83-amino-acid chain; its full sequence is Defensin-like protein 194 (83 aa).

Residues 1–27 (MAMKSVSNFAIFLILFLVTSEISEIEA) form the signal peptide. 4 disulfide bridges follow: C32–C78, C44–C68, C53–C73, and C57–C75.

Belongs to the DEFL family. Protease inhibitor I18 (RTI/MTI-2) subfamily.

The protein resides in the secreted. This Arabidopsis thaliana (Mouse-ear cress) protein is Defensin-like protein 194 (ATTI3).